The sequence spans 234 residues: Probable GTP-binding protein EngB (234 aa).

An EngB-type G domain is found at 23–209 (AVPEVAFAGR…QRTVAGWLCL (187 aa)). GTP contacts are provided by residues 31–38 (GRSNAGKS), 58–62 (GRTQH), 82–85 (DLPG), 149–152 (TKAD), and 187–190 (LFSS). Mg(2+) is bound by residues Ser-38 and Thr-60. Positions 210 to 234 (PEAMPPSPDAEPAKKTPSPDAQRGE) are disordered.

It belongs to the TRAFAC class TrmE-Era-EngA-EngB-Septin-like GTPase superfamily. EngB GTPase family. It depends on Mg(2+) as a cofactor.

In terms of biological role, necessary for normal cell division and for the maintenance of normal septation. In Ralstonia nicotianae (strain ATCC BAA-1114 / GMI1000) (Ralstonia solanacearum), this protein is Probable GTP-binding protein EngB.